A 58-amino-acid chain; its full sequence is Mesomartoxin (58 aa).

Residues 1–29 (MMSRLSVFILIALVLSVIIDVLNNSKVEG) form the signal peptide. 3 cysteine pairs are disulfide-bonded: cysteine 31–cysteine 49, cysteine 35–cysteine 54, and cysteine 39–cysteine 56.

Belongs to the short scorpion toxin superfamily. Potassium channel inhibitor family. Alpha-KTx 26 subfamily. Expressed by the venom gland.

It is found in the secreted. Its function is as follows. Recombinant toxin that reversibly blocks the voltage-gated potassium channels Shaker (IC(50)=0.054 nM), rKv1.2/KCNA2 (IC(50)=15.6 nM), and rKv1.3/KCNA3 (IC(50)=12.5 uM). This is Mesomartoxin from Olivierus martensii (Manchurian scorpion).